A 454-amino-acid polypeptide reads, in one-letter code: Pup--protein ligase (454 aa).

Mg(2+) is bound at residue Glu-9. Arg-53 is a binding site for ATP. Tyr-55 contacts Mg(2+). The active-site Proton acceptor is the Asp-57. Glu-63 is a binding site for Mg(2+). Thr-66 and Trp-420 together coordinate ATP.

It belongs to the Pup ligase/Pup deamidase family. Pup-conjugating enzyme subfamily.

The catalysed reaction is ATP + [prokaryotic ubiquitin-like protein]-L-glutamate + [protein]-L-lysine = ADP + phosphate + N(6)-([prokaryotic ubiquitin-like protein]-gamma-L-glutamyl)-[protein]-L-lysine.. It functions in the pathway protein degradation; proteasomal Pup-dependent pathway. It participates in protein modification; protein pupylation. Its function is as follows. Catalyzes the covalent attachment of the prokaryotic ubiquitin-like protein modifier Pup to the proteasomal substrate proteins, thereby targeting them for proteasomal degradation. This tagging system is termed pupylation. The ligation reaction involves the side-chain carboxylate of the C-terminal glutamate of Pup and the side-chain amino group of a substrate lysine. The sequence is that of Pup--protein ligase from Pseudarthrobacter chlorophenolicus (strain ATCC 700700 / DSM 12829 / CIP 107037 / JCM 12360 / KCTC 9906 / NCIMB 13794 / A6) (Arthrobacter chlorophenolicus).